Consider the following 413-residue polypeptide: O-methyltransferase kntB (413 aa).

S-adenosyl-L-methionine contacts are provided by residues 255 to 256 (GG), Asp280, 302 to 303 (NF), and Arg319. Residue His322 is the Proton acceptor of the active site.

It belongs to the class I-like SAM-binding methyltransferase superfamily. Cation-independent O-methyltransferase family. S-adenosyl-L-methionine is required as a cofactor.

It participates in secondary metabolite biosynthesis. Non-reducing polyketide synthase; part of the gene cluster that mediates the biosynthesis of the bicoumarin kotanin. The non-reducing polyketide synthase ktnS first catalyzes the formation of the pentaketidic 4,7-dihydroxy-5-methylcoumarin from acetyl coenzyme A and 4 malonyl coenzyme A molecules. Further O-methylation by ktnB leads to the formation of 7-demethylsiderin. Then, an oxidative phenol coupling catalyzed by the cytochrome P450 monooxygenase ktnC forms the 8,8'-dimer P-orlandin via dimerization the monomeric precursor, 7-demethylsiderin. P-orlandin is subsequently O-methylated in a stepwise fashion to demethylkotanin and kotanin. In Aspergillus niger (strain ATCC MYA-4892 / CBS 513.88 / FGSC A1513), this protein is O-methyltransferase kntB.